Here is a 594-residue protein sequence, read N- to C-terminus: Arginine--tRNA ligase (594 aa).

A 'HIGH' region motif is present at residues Ala133–Ser143.

It belongs to the class-I aminoacyl-tRNA synthetase family. As to quaternary structure, monomer.

The protein resides in the cytoplasm. It catalyses the reaction tRNA(Arg) + L-arginine + ATP = L-arginyl-tRNA(Arg) + AMP + diphosphate. The polypeptide is Arginine--tRNA ligase (Leptospira biflexa serovar Patoc (strain Patoc 1 / Ames)).